A 199-amino-acid polypeptide reads, in one-letter code: Tumor necrosis factor ligand superfamily member 4 (199 aa).

Over 1–25 the chain is Cytoplasmic; sequence MEGEGVQPPDENLENGSRPRFKWKK. Residues 26-48 form a helical; Signal-anchor for type II membrane protein membrane-spanning segment; the sequence is VLRLVVSGIKAAGLLLCVVYVCL. Over 49 to 199 the chain is Extracellular; sequence QFSSSPAKDS…YSSTVNQVPL (151 aa). Residues 59 to 176 enclose the THD domain; it reads PIQRLRAPVT…QINDGELIIV (118 aa). Disulfide bonds link Cys70/Cys163 and Cys98/Cys184. Asn91 and Asn157 each carry an N-linked (GlcNAc...) asparagine glycan.

Belongs to the tumor necrosis factor family. As to quaternary structure, homotrimer. As to expression, detected in T-cell lines, but not in a macrophage cell line.

The protein localises to the membrane. Functionally, cytokine that binds to TNFRSF4. Co-stimulates T-cell proliferation and cytokine production. The chain is Tumor necrosis factor ligand superfamily member 4 (Tnfsf4) from Rattus norvegicus (Rat).